A 93-amino-acid chain; its full sequence is Putative defensin-like protein 190 (93 aa).

An N-terminal signal peptide occupies residues 1–30 (MKMAKAAATNDFGFITCLVIFLVLAGISNG). Cystine bridges form between C39–C89, C55–C75, C60–C84, and C64–C86.

This sequence belongs to the DEFL family.

The protein localises to the secreted. The polypeptide is Putative defensin-like protein 190 (Arabidopsis thaliana (Mouse-ear cress)).